The following is a 186-amino-acid chain: Elongation factor P (186 aa).

This sequence belongs to the elongation factor P family.

Its subcellular location is the cytoplasm. Its pathway is protein biosynthesis; polypeptide chain elongation. In terms of biological role, involved in peptide bond synthesis. Stimulates efficient translation and peptide-bond synthesis on native or reconstituted 70S ribosomes in vitro. Probably functions indirectly by altering the affinity of the ribosome for aminoacyl-tRNA, thus increasing their reactivity as acceptors for peptidyl transferase. This is Elongation factor P from Brucella canis (strain ATCC 23365 / NCTC 10854 / RM-666).